The following is a 192-amino-acid chain: Crossover junction endodeoxyribonuclease RuvC (192 aa).

Residues Asp20, Glu80, and Asp153 contribute to the active site. Residues Asp20, Glu80, and Asp153 each contribute to the Mg(2+) site.

The protein belongs to the RuvC family. In terms of assembly, homodimer which binds Holliday junction (HJ) DNA. The HJ becomes 2-fold symmetrical on binding to RuvC with unstacked arms; it has a different conformation from HJ DNA in complex with RuvA. In the full resolvosome a probable DNA-RuvA(4)-RuvB(12)-RuvC(2) complex forms which resolves the HJ. Mg(2+) is required as a cofactor.

The protein localises to the cytoplasm. The enzyme catalyses Endonucleolytic cleavage at a junction such as a reciprocal single-stranded crossover between two homologous DNA duplexes (Holliday junction).. The RuvA-RuvB-RuvC complex processes Holliday junction (HJ) DNA during genetic recombination and DNA repair. Endonuclease that resolves HJ intermediates. Cleaves cruciform DNA by making single-stranded nicks across the HJ at symmetrical positions within the homologous arms, yielding a 5'-phosphate and a 3'-hydroxyl group; requires a central core of homology in the junction. The consensus cleavage sequence is 5'-(A/T)TT(C/G)-3'. Cleavage occurs on the 3'-side of the TT dinucleotide at the point of strand exchange. HJ branch migration catalyzed by RuvA-RuvB allows RuvC to scan DNA until it finds its consensus sequence, where it cleaves and resolves the cruciform DNA. The chain is Crossover junction endodeoxyribonuclease RuvC from Christiangramia forsetii (strain DSM 17595 / CGMCC 1.15422 / KT0803) (Gramella forsetii).